The chain runs to 528 residues: Ribonuclease Y (528 aa).

A helical transmembrane segment spans residues 15–35 (SLLVFALICGSIIGYFLYSFF). Positions 217–277 (NISVVNIPNE…IRREIAKKTL (61 aa)) constitute a KH domain. Residues 343 to 436 (VLKHSLEVAF…VAIADTLSSA (94 aa)) form the HD domain.

Belongs to the RNase Y family.

It localises to the cell membrane. Functionally, endoribonuclease that initiates mRNA decay. The polypeptide is Ribonuclease Y (Onion yellows phytoplasma (strain OY-M)).